The following is a 233-amino-acid chain: Outer membrane protein MIP (233 aa).

An N-terminal signal peptide occupies residues 1 to 20 (MKMKLVTAAVMGLAMSTAMA). A PPIase FKBP-type domain is found at 144–233 (SDTVTVEYTG…IHLISVKKSS (90 aa)).

Belongs to the FKBP-type PPIase family.

The protein resides in the cell outer membrane. The catalysed reaction is [protein]-peptidylproline (omega=180) = [protein]-peptidylproline (omega=0). Its function is as follows. Essential virulence factor associated with macrophage infectivity. Exhibits PPIase activity. This chain is Outer membrane protein MIP (mip), found in Legionella pneumophila (strain Corby).